The primary structure comprises 230 residues: RING finger protein 141 (230 aa).

A lipid anchor (N-myristoyl glycine) is attached at G2. The segment at 155 to 192 (CCICMDGRADLILPCAHSFCQKCIDKWSDRHRNCPICR) adopts an RING-type zinc-finger fold.

The protein resides in the membrane. May be involved in spermatogenesis. In Pongo abelii (Sumatran orangutan), this protein is RING finger protein 141 (RNF141).